Here is a 26-residue protein sequence, read N- to C-terminus: Neprilysin (26 aa).

This sequence belongs to the peptidase M13 family. Zn(2+) serves as cofactor.

The protein localises to the cell membrane. It catalyses the reaction Preferential cleavage of polypeptides between hydrophobic residues, particularly with Phe or Tyr at P1'.. The enzyme catalyses substance P + H2O = substance P(1-9) + L-Leu-L-Met-NH2. It carries out the reaction substance P + H2O = substance P(1-7) + L-Phe-Gly-L-Leu-L-Met-NH2. The catalysed reaction is neurotensin + H2O = neurotensin(1-11) + L-isoleucyl-L-leucine. It catalyses the reaction neurotensin + H2O = neurotensin(1-10) + L-tyrosyl-L-isoleucyl-L-leucine. In terms of biological role, thermolysin-like specificity, but is almost confined on acting on polypeptides of up to 30 amino acids. Biologically important in the destruction of opioid peptides such as Met- and Leu-enkephalins by cleavage of a Gly-Phe bond. Catalyzes cleavage of bradykinin, substance P and neurotensin peptides. Able to cleave angiotensin-1, angiotensin-2 and angiotensin 1-9. Involved in the degradation of atrial natriuretic factor (ANF) and brain natriuretic factor (BNP(1-32)). Displays UV-inducible elastase activity toward skin preelastic and elastic fibers. The protein is Neprilysin (MME) of Sus scrofa (Pig).